A 436-amino-acid chain; its full sequence is Xylose isomerase (436 aa).

Active-site residues include H100 and D103. Mg(2+)-binding residues include E231, E267, H270, D295, D306, D308, and D338.

Belongs to the xylose isomerase family. In terms of assembly, homotetramer. It depends on Mg(2+) as a cofactor.

The protein resides in the cytoplasm. The catalysed reaction is alpha-D-xylose = alpha-D-xylulofuranose. The sequence is that of Xylose isomerase from Chelativorans sp. (strain BNC1).